The primary structure comprises 523 residues: 2-isopropylmalate synthase (523 aa).

The 263-residue stretch at 5–267 (VIIFDTTLRD…ETGINAKEIH (263 aa)) folds into the Pyruvate carboxyltransferase domain. Residues aspartate 14, histidine 202, histidine 204, and asparagine 238 each contribute to the Mn(2+) site. Residues 392-523 (QLKQLVVHSD…QQKARSLGGV (132 aa)) form a regulatory domain region.

The protein belongs to the alpha-IPM synthase/homocitrate synthase family. LeuA type 1 subfamily. In terms of assembly, homodimer. The cofactor is Mn(2+).

The protein resides in the cytoplasm. It catalyses the reaction 3-methyl-2-oxobutanoate + acetyl-CoA + H2O = (2S)-2-isopropylmalate + CoA + H(+). The protein operates within amino-acid biosynthesis; L-leucine biosynthesis; L-leucine from 3-methyl-2-oxobutanoate: step 1/4. In terms of biological role, catalyzes the condensation of the acetyl group of acetyl-CoA with 3-methyl-2-oxobutanoate (2-ketoisovalerate) to form 3-carboxy-3-hydroxy-4-methylpentanoate (2-isopropylmalate). This Shewanella woodyi (strain ATCC 51908 / MS32) protein is 2-isopropylmalate synthase.